Consider the following 423-residue polypeptide: Glutamyl-tRNA(Gln) amidotransferase subunit A (423 aa).

Residues 1–20 form a disordered region; that stretch reads MSHNAFITEETIEPTDDGPL. The span at 10-19 shows a compositional bias: acidic residues; sequence ETIEPTDDGP. Active-site charge relay system residues include K28 and S103. The segment at 75–108 is disordered; it reads EFGMGTTTETSAFGPTENPAAEGRVPGGSSGGSA. The Acyl-ester intermediate role is filled by S127. A disordered region spans residues 183-206; that stretch reads DERDGTTREPPAGQPTYADAADGD.

This sequence belongs to the amidase family. GatA subfamily. In terms of assembly, heterotrimer of A, B and C subunits.

The enzyme catalyses L-glutamyl-tRNA(Gln) + L-glutamine + ATP + H2O = L-glutaminyl-tRNA(Gln) + L-glutamate + ADP + phosphate + H(+). In terms of biological role, allows the formation of correctly charged Gln-tRNA(Gln) through the transamidation of misacylated Glu-tRNA(Gln) in organisms which lack glutaminyl-tRNA synthetase. The reaction takes place in the presence of glutamine and ATP through an activated gamma-phospho-Glu-tRNA(Gln). The sequence is that of Glutamyl-tRNA(Gln) amidotransferase subunit A from Natronomonas pharaonis (strain ATCC 35678 / DSM 2160 / CIP 103997 / JCM 8858 / NBRC 14720 / NCIMB 2260 / Gabara) (Halobacterium pharaonis).